Here is a 238-residue protein sequence, read N- to C-terminus: Probable phosphatase phospho2 (238 aa).

Aspartate 8 (nucleophile) is an active-site residue. Residues aspartate 8 and aspartate 10 each contribute to the Mg(2+) site. Residue aspartate 10 is the Proton donor of the active site. Residues aspartate 19 and aspartate 99 each contribute to the substrate site. Aspartate 179 lines the Mg(2+) pocket.

It belongs to the HAD-like hydrolase superfamily. PHOSPHO family. The cofactor is Mg(2+).

Its function is as follows. Probable phosphatase. This is Probable phosphatase phospho2 (phospho2) from Xenopus tropicalis (Western clawed frog).